The primary structure comprises 389 residues: tRNA-specific 2-thiouridylase MnmA (389 aa).

ATP is bound by residues 34–41 (AMSGGVDS) and L60. Residue C128 is the Nucleophile of the active site. C128 and C225 are joined by a disulfide. ATP is bound at residue G152. The interaction with tRNA stretch occupies residues 174–176 (RDQ). Residue C225 is the Cysteine persulfide intermediate of the active site.

This sequence belongs to the MnmA/TRMU family.

Its subcellular location is the cytoplasm. The enzyme catalyses S-sulfanyl-L-cysteinyl-[protein] + uridine(34) in tRNA + AH2 + ATP = 2-thiouridine(34) in tRNA + L-cysteinyl-[protein] + A + AMP + diphosphate + H(+). Catalyzes the 2-thiolation of uridine at the wobble position (U34) of tRNA, leading to the formation of s(2)U34. In Paracoccus denitrificans (strain Pd 1222), this protein is tRNA-specific 2-thiouridylase MnmA.